A 263-amino-acid polypeptide reads, in one-letter code: Hydroxyethylthiazole kinase 1 (263 aa).

A substrate-binding site is contributed by Met-42. ATP-binding residues include Lys-118 and Thr-164. Substrate is bound at residue Gly-191.

It belongs to the Thz kinase family. It depends on Mg(2+) as a cofactor.

The catalysed reaction is 5-(2-hydroxyethyl)-4-methylthiazole + ATP = 4-methyl-5-(2-phosphooxyethyl)-thiazole + ADP + H(+). It participates in cofactor biosynthesis; thiamine diphosphate biosynthesis; 4-methyl-5-(2-phosphoethyl)-thiazole from 5-(2-hydroxyethyl)-4-methylthiazole: step 1/1. Functionally, catalyzes the phosphorylation of the hydroxyl group of 4-methyl-5-beta-hydroxyethylthiazole (THZ). This chain is Hydroxyethylthiazole kinase 1, found in Clostridium botulinum (strain Okra / Type B1).